Here is a 937-residue protein sequence, read N- to C-terminus: MORC family CW-type zinc finger protein 4 (937 aa).

Residues 420-472 (KVPDQTWVQCDECLKWRKLPGKIDPSMLPARWFCYYNSHPKYRRCSVPEEQEL) form a CW-type zinc finger. Residues Cys-429, Cys-432, Cys-453, and Cys-464 each contribute to the Zn(2+) site. The disordered stretch occupies residues 606–637 (PEGENSHDKSSSERSTPPYLFPEYPEASKNTG). Residues 762 to 876 (KLKNQRELEE…LEMLQKAQVS (115 aa)) adopt a coiled-coil conformation.

As to expression, expressed at low levels in normal tissues, with highest expression levels in placenta and testis. Expression is significantly increased in subset of diffuse large B-cell lymphomas.

Its subcellular location is the nucleus. Histone methylation reader which binds to non-methylated (H3K4me0), monomethylated (H3K4me1), dimethylated (H3K4me2) and trimethylated (H3K4me3) 'Lys-4' on histone H3. The order of binding preference is H3K4me3 &gt; H3K4me2 &gt; H3K4me1 &gt; H3K4me0. This chain is MORC family CW-type zinc finger protein 4 (MORC4), found in Homo sapiens (Human).